The sequence spans 196 residues: DNA polymerase epsilon subunit D (196 aa).

Residues Arg-125–Thr-196 form a disordered region. The segment covering Gly-133–Met-143 has biased composition (acidic residues). Basic and acidic residues predominate over residues Gly-144 to Asp-159. Positions Glu-160 to Glu-173 are enriched in acidic residues. The segment covering Ser-174 to Thr-188 has biased composition (basic and acidic residues). Ser-183 is modified (phosphoserine; by ATM or ATR).

DNA polymerase epsilon is a heterotetramer consisting of POL2, DPB2, DPB3 and DPB4. Component of the ISW2 complex, which at least consists of ISW2, ITC1, DLS1 and DPB4.

The protein localises to the nucleus. Functionally, as accessory component of the DNA polymerase epsilon (DNA polymerase II) participates in chromosomal DNA replication. It is required during synthesis of the leading and lagging DNA strands at the replication fork and binds at/or near replication origins and moves along DNA with the replication fork. It has 3'-5' proofreading exonuclease activity that correct errors arising during DNA replication. It is also involved in DNA synthesis during DNA repair. Also functions as a component of the ISW2 complex, which acts in remodeling the chromatin by catalyzing an ATP-dependent alteration in the structure of nucleosomal DNA. The ISW2 complex is involved in coordinating transcriptional repression and in inheritance of telomeric silencing. It is involved in repression of MAT a-specific genes, INO1, and early meiotic genes during mitotic growth dependent upon transcription factor UME6 and in a parallel pathway to the RPD3-SIN3 histone deacetylase complex. The chain is DNA polymerase epsilon subunit D (DPB4) from Saccharomyces cerevisiae (strain ATCC 204508 / S288c) (Baker's yeast).